Here is an 816-residue protein sequence, read N- to C-terminus: Homeobox-leucine zipper protein ROC9 (816 aa).

Residues 26–104 are disordered; the sequence is VFGRKNGPAA…RRKNYHRHTA (79 aa). The span at 92–101 shows a compositional bias: basic residues; it reads KKRRRKNYHR. Residues 95–154 constitute a DNA-binding region (homeobox); sequence RRKNYHRHTAEQIRIMEALFKESPHPDERQRQQVSKQLGLSARQVKFWFQNRRTQIKAVQ. Residues 149-182 are a coiled coil; sequence QIKAVQERHENSLLKSELEKLQDEHRAMRELAKK. The tract at residues 265 to 296 is disordered; it reads KSAADGIASPPCSASAGAMQTNSRSPPLHDHD. Residues 302 to 541 form the START domain; the sequence is HDDDKPRILE…LQLQCERMVF (240 aa).

Belongs to the HD-ZIP homeobox family. Class IV subfamily.

Its subcellular location is the nucleus. In terms of biological role, probable transcription factor. The sequence is that of Homeobox-leucine zipper protein ROC9 (ROC9) from Oryza sativa subsp. japonica (Rice).